The following is a 448-amino-acid chain: MDFRYLPMTQEDEKEMLQTIGADSIEDLLADIPASVRDQGTLEEVGIPLPETDLIRTLSKLADQNMNTKQYPSFLGAGIYDHYAPAVVNHMLLRSEFYTAYTPYQPEISQGELQAIFEYQTMICELTGMDVANSSMYDGITALAEAAMLACAHKKKKTIVLSDGVHPEAHDVVRTYANGPGLEVETLPLVNGETAIANLDALEDVACVIVQYPNFYGRVEDLQALADATHAKGGLFIVSANPLALGLLEAPGKLGADITIGDCQPFGIPQSFGGPTCGYFTTTKALMRKIPGRLVGQTVDEDGKRGFVLTLQAREQHIRRDKATSNICSNQALNALAASIAMSALGKRGIRELATRNLQTAYALKKSLIQAGFHIVDDGPSFNEFVVELPIDATEAGKQLLQAGIIGGLPLGTFDESRSNQMLVCATELRTKEELDQFVTALGGLTHA.

The protein belongs to the GcvP family. N-terminal subunit subfamily. As to quaternary structure, the glycine cleavage system is composed of four proteins: P, T, L and H. In this organism, the P 'protein' is a heterodimer of two subunits.

It catalyses the reaction N(6)-[(R)-lipoyl]-L-lysyl-[glycine-cleavage complex H protein] + glycine + H(+) = N(6)-[(R)-S(8)-aminomethyldihydrolipoyl]-L-lysyl-[glycine-cleavage complex H protein] + CO2. Functionally, the glycine cleavage system catalyzes the degradation of glycine. The P protein binds the alpha-amino group of glycine through its pyridoxal phosphate cofactor; CO(2) is released and the remaining methylamine moiety is then transferred to the lipoamide cofactor of the H protein. This is Probable glycine dehydrogenase (decarboxylating) subunit 1 from Exiguobacterium sibiricum (strain DSM 17290 / CCUG 55495 / CIP 109462 / JCM 13490 / 255-15).